The chain runs to 181 residues: Transmembrane protein 47 (181 aa).

Ala2 carries the N-acetylalanine modification. Transmembrane regions (helical) follow at residues Leu21 to Pro41, Ala83 to Ile103, Val115 to Ile135, and Gly152 to Leu172.

This sequence belongs to the TMEM47 family. In terms of assembly, interacts with CTNNB1, CTNNA1, PRKCI, PARD6B, FYB1. In terms of tissue distribution, expressed in adult brain, fetal brain, cerebellum, heart, lung, prostate and thyroid.

It localises to the membrane. Its subcellular location is the cell junction. It is found in the adherens junction. Its function is as follows. Regulates cell junction organization in epithelial cells. May play a role in the transition from adherens junction to tight junction assembly. May regulate F-actin polymerization required for tight junctional localization dynamics and affect the junctional localization of PARD6B. During podocyte differentiation may negatively regulate activity of FYN and subsequently the abundance of nephrin. The protein is Transmembrane protein 47 (TMEM47) of Homo sapiens (Human).